Reading from the N-terminus, the 128-residue chain is Cytochrome c-type biogenesis protein CcmE (128 aa).

Residues 1 to 8 (MQKRVRNR) lie on the Cytoplasmic side of the membrane. Residues 9–29 (LITIIICFCSAFLGIGIILYN) form a helical; Signal-anchor for type II membrane protein membrane-spanning segment. At 30–128 (LENNIVFFLP…KHDENYRPTR (99 aa)) the chain is on the periplasmic side. Residues H120 and Y124 each coordinate heme.

Belongs to the CcmE/CycJ family.

The protein resides in the cell inner membrane. Its function is as follows. Heme chaperone required for the biogenesis of c-type cytochromes. Transiently binds heme delivered by CcmC and transfers the heme to apo-cytochromes in a process facilitated by CcmF and CcmH. The sequence is that of Cytochrome c-type biogenesis protein CcmE from Rickettsia canadensis (strain McKiel).